The chain runs to 650 residues: DNA gyrase subunit B (650 aa).

The region spanning 429–543 (NELFIVEGDS…AGYVYIAQPP (115 aa)) is the Toprim domain. Positions 435, 508, and 510 each coordinate Mg(2+).

Belongs to the type II topoisomerase GyrB family. As to quaternary structure, heterotetramer, composed of two GyrA and two GyrB chains. In the heterotetramer, GyrA contains the active site tyrosine that forms a transient covalent intermediate with DNA, while GyrB binds cofactors and catalyzes ATP hydrolysis. Mg(2+) serves as cofactor. It depends on Mn(2+) as a cofactor. Requires Ca(2+) as cofactor.

Its subcellular location is the cytoplasm. It catalyses the reaction ATP-dependent breakage, passage and rejoining of double-stranded DNA.. A type II topoisomerase that negatively supercoils closed circular double-stranded (ds) DNA in an ATP-dependent manner to modulate DNA topology and maintain chromosomes in an underwound state. Negative supercoiling favors strand separation, and DNA replication, transcription, recombination and repair, all of which involve strand separation. Also able to catalyze the interconversion of other topological isomers of dsDNA rings, including catenanes and knotted rings. Type II topoisomerases break and join 2 DNA strands simultaneously in an ATP-dependent manner. This chain is DNA gyrase subunit B, found in Streptococcus pyogenes serotype M1.